Consider the following 200-residue polypeptide: ATP-dependent Clp protease proteolytic subunit (200 aa).

The active-site Nucleophile is the S98. Residue H123 is part of the active site.

This sequence belongs to the peptidase S14 family. As to quaternary structure, fourteen ClpP subunits assemble into 2 heptameric rings which stack back to back to give a disk-like structure with a central cavity, resembling the structure of eukaryotic proteasomes.

The protein resides in the cytoplasm. It carries out the reaction Hydrolysis of proteins to small peptides in the presence of ATP and magnesium. alpha-casein is the usual test substrate. In the absence of ATP, only oligopeptides shorter than five residues are hydrolyzed (such as succinyl-Leu-Tyr-|-NHMec, and Leu-Tyr-Leu-|-Tyr-Trp, in which cleavage of the -Tyr-|-Leu- and -Tyr-|-Trp bonds also occurs).. Functionally, cleaves peptides in various proteins in a process that requires ATP hydrolysis. Has a chymotrypsin-like activity. Plays a major role in the degradation of misfolded proteins. This Ehrlichia canis (strain Jake) protein is ATP-dependent Clp protease proteolytic subunit.